The sequence spans 237 residues: 1-(5-phosphoribosyl)-5-[(5-phosphoribosylamino)methylideneamino] imidazole-4-carboxamide isomerase (237 aa).

Asp-8 (proton acceptor) is an active-site residue. Catalysis depends on Asp-130, which acts as the Proton donor.

The protein belongs to the HisA/HisF family.

It localises to the cytoplasm. It catalyses the reaction 1-(5-phospho-beta-D-ribosyl)-5-[(5-phospho-beta-D-ribosylamino)methylideneamino]imidazole-4-carboxamide = 5-[(5-phospho-1-deoxy-D-ribulos-1-ylimino)methylamino]-1-(5-phospho-beta-D-ribosyl)imidazole-4-carboxamide. It participates in amino-acid biosynthesis; L-histidine biosynthesis; L-histidine from 5-phospho-alpha-D-ribose 1-diphosphate: step 4/9. The protein is 1-(5-phosphoribosyl)-5-[(5-phosphoribosylamino)methylideneamino] imidazole-4-carboxamide isomerase of Caldicellulosiruptor saccharolyticus (strain ATCC 43494 / DSM 8903 / Tp8T 6331).